A 163-amino-acid polypeptide reads, in one-letter code: Nucleotide-binding protein all4662 (163 aa).

It belongs to the YajQ family.

In terms of biological role, nucleotide-binding protein. This chain is Nucleotide-binding protein all4662, found in Nostoc sp. (strain PCC 7120 / SAG 25.82 / UTEX 2576).